The following is a 1194-amino-acid chain: Cohesin subunit SA-2 (1194 aa).

Positions 224–309 (FVHRYRDAIA…SRFKDRIVSM (86 aa)) constitute an SCD domain. Residues 986-1027 (DTMSVMSGMSGRGSSTRSKKIKPPTGKRKLPEAEESSSSDSM) are disordered. Positions 988–1001 (MSVMSGMSGRGSST) are enriched in low complexity. The segment covering 1002 to 1013 (RSKKIKPPTGKR) has biased composition (basic residues).

This sequence belongs to the SCC3 family. In terms of assembly, part of the cohesin complex which is composed of a heterodimer between a SMC1 protein (SMC1A or SMC1B) and SMC3, which are attached via their hinge domain, and RAD21 which link them at their heads, and one STAG protein (STAG1, STAG2 or STAG3). In cohesin complexes, STAG2 is mutually exclusive with STAG1 and STAG3. Interacts directly with RAD21 in cohesin complex. Phosphorylated by PLK1. The large dissociation of cohesin from chromosome arms during prophase is partly due to its phosphorylation.

The protein resides in the nucleus. Its subcellular location is the chromosome. The protein localises to the centromere. In terms of biological role, component of cohesin complex, a complex required for the cohesion of sister chromatids after DNA replication. The cohesin complex apparently forms a large proteinaceous ring within which sister chromatids can be trapped. At anaphase, the complex is cleaved and dissociates from chromatin, allowing sister chromatids to segregate. The cohesin complex may also play a role in spindle pole assembly during mitosis. The sequence is that of Cohesin subunit SA-2 (stag2) from Xenopus laevis (African clawed frog).